The sequence spans 430 residues: MTLMISTSVLDAENASRRDALTRDYESLGDRLARRGIDIDAVKAKVAAYGVAVPSWGVGTGGTRFARFPGPGEPRNIFDKLEDCAVIQQLTRATPAVSLHIPWDKVSDLGALKEKGSALGLSFDAMNSNTFSDAPGQAHSYKFGSLSHTDSATRRQAIEHNLECVEIGKALGSKALTVWVGDGSNFPGQSNFTRAFERYLDSMKAVYAALPDDWRIFTEHKMFEPAFYSTVVQDWGTNYLIAQELGPKAFCLVDLGHHAPNVNIEMIVARLIQFKKLGGFHFNDSKYGDDDLDTGSIDPYRLFLVFNELVDAETRAANGFDPAHMLDQSHNVTDPIESLMTSAMEVGRAYAQALIVDRKALAGYQEENDALMASETLKTAFRTDVEPILATARLENDGAIAPVAAYRASGYRARVAAERPAVAGGGGGIV.

Histidine 257, aspartate 289, and aspartate 291 together coordinate Mn(2+).

This sequence belongs to the rhamnose isomerase family. Mn(2+) serves as cofactor.

The sequence is that of Probable sugar isomerase R00627 from Rhizobium meliloti (strain 1021) (Ensifer meliloti).